Consider the following 431-residue polypeptide: Phosphate regulon sensor protein PhoR (431 aa).

Residues 1–9 are Cytoplasmic-facing; it reads MLERLSWKR. The helical transmembrane segment at 10–28 threads the bilayer; the sequence is LVLELLLCCLPAFILGAFF. Residues 29-32 lie on the Periplasmic side of the membrane; that stretch reads GYLP. The helical transmembrane segment at 33–51 threads the bilayer; it reads WFLLASVTGLLIWHFWNLL. Over 52–431 the chain is Cytoplasmic; sequence RLSWWLWVDR…PERLIAKNSD (380 aa). The PAS domain occupies 96–172; sequence LIKRFRSGAE…RPLNLVLNTG (77 aa). The Histidine kinase domain occupies 210-425; sequence NVSHELRTPL…RFSFVIPERL (216 aa). His213 carries the phosphohistidine; by autocatalysis modification.

It localises to the cell inner membrane. It catalyses the reaction ATP + protein L-histidine = ADP + protein N-phospho-L-histidine.. Functionally, member of the two-component regulatory system PhoR/PhoB involved in the phosphate regulon genes expression. PhoR may function as a membrane-associated protein kinase that phosphorylates PhoB in response to environmental signals. The sequence is that of Phosphate regulon sensor protein PhoR (phoR) from Escherichia coli (strain K12).